A 501-amino-acid chain; its full sequence is Probable cytochrome P450 508A4 (501 aa).

Residues 1 to 21 traverse the membrane as a helical segment; that stretch reads MIMLIKVFVLLLVVYILHNSY. Residue Cys-445 participates in heme binding.

This sequence belongs to the cytochrome P450 family. Requires heme as cofactor.

It localises to the membrane. This Dictyostelium discoideum (Social amoeba) protein is Probable cytochrome P450 508A4 (cyp508A4).